Here is a 1169-residue protein sequence, read N- to C-terminus: Transcription-repair-coupling factor (1169 aa).

A Helicase ATP-binding domain is found at 634-795 (DMERERPMDR…MLGVRDLSVI (162 aa)). Residue 647-654 (GDVGYGKT) coordinates ATP. The short motif at 748-751 (DEEQ) is the DEEQ box element. In terms of domain architecture, Helicase C-terminal spans 809–970 (VLEQNSNFIK…GFKIAMRDLN (162 aa)).

The protein in the N-terminal section; belongs to the UvrB family. This sequence in the C-terminal section; belongs to the helicase family. RecG subfamily.

The protein resides in the cytoplasm. In terms of biological role, couples transcription and DNA repair by recognizing RNA polymerase (RNAP) stalled at DNA lesions. Mediates ATP-dependent release of RNAP and its truncated transcript from the DNA, and recruitment of nucleotide excision repair machinery to the damaged site. This Staphylococcus haemolyticus (strain JCSC1435) protein is Transcription-repair-coupling factor.